We begin with the raw amino-acid sequence, 294 residues long: MNFQSVIATLHQFWAERGCLIAQPYDIEKGAGTKNPHTFLRALGPEPWAVAYVEPCRRPTDGRYGENPNRVQHYYQYQVLIKPSPDNIQDIYLDSLRALGIRPEDHDIRFVEDNWEDATVGAWGTGWEVWLDGMEITQFTYFQQCGGIDCRPVSIEITYGLERLAMYLQEVEAITKIHWTDDITYGDVFLQNEIEQSTYNFEASNPELLLTLFSLYEQEATQLTEKGLVLPSLDYVMKCSHTFNLLDARGVISVTERTRYIARIRHLARKVANLYVEQREKLGFPLLKNVPVAQ.

Belongs to the class-II aminoacyl-tRNA synthetase family. In terms of assembly, tetramer of two alpha and two beta subunits.

The protein resides in the cytoplasm. It carries out the reaction tRNA(Gly) + glycine + ATP = glycyl-tRNA(Gly) + AMP + diphosphate. In Trichormus variabilis (strain ATCC 29413 / PCC 7937) (Anabaena variabilis), this protein is Glycine--tRNA ligase alpha subunit.